A 421-amino-acid polypeptide reads, in one-letter code: Testin (421 aa).

Residues 92-199 (MILTNPVAAK…GDVKLPCEMD (108 aa)) form the PET domain. The tract at residues 133–164 (EKQPVAGSEGAQYRKKQLAKQLPAHDQDPSKC) is disordered. Positions 155–164 (PAHDQDPSKC) are enriched in basic and acidic residues. 3 consecutive LIM zinc-binding domains span residues 234-297 (YSCY…CDSE), 299-359 (PRCA…NHAV), and 362-421 (QGCH…KMMS).

The protein belongs to the prickle / espinas / testin family. Interacts via LIM domain 1 with ZYX. Interacts (via LIM domain 3) with ENAH and VASP. Interacts with ALKBH4, talin, actin, alpha-actinin, GRIP1 and PXN. Interacts (via LIM domain 2) with ACTL7A (via N-terminus). Heterodimer with ACTL7A; the heterodimer interacts with ENAH to form a heterotrimer.

The protein resides in the cytoplasm. Its subcellular location is the cell junction. It localises to the focal adhesion. Scaffold protein that may play a role in cell adhesion, cell spreading and in the reorganization of the actin cytoskeleton. Plays a role in the regulation of cell proliferation. May act as a tumor suppressor. This is Testin (TES) from Papio anubis (Olive baboon).